Consider the following 212-residue polypeptide: ATP-dependent dethiobiotin synthetase BioD (212 aa).

ATP is bound at residue 13-18 (GIGKTV). Mg(2+) is bound at residue Thr-17. Residue Lys-33 is part of the active site. Ser-37 is a substrate binding site. Residue Glu-100 participates in Mg(2+) binding. ATP contacts are provided by residues 100–103 (EGAG) and 184–186 (PRL).

Belongs to the dethiobiotin synthetase family. Homodimer. Requires Mg(2+) as cofactor.

The protein localises to the cytoplasm. It carries out the reaction (7R,8S)-7,8-diammoniononanoate + CO2 + ATP = (4R,5S)-dethiobiotin + ADP + phosphate + 3 H(+). It participates in cofactor biosynthesis; biotin biosynthesis; biotin from 7,8-diaminononanoate: step 1/2. Its function is as follows. Catalyzes a mechanistically unusual reaction, the ATP-dependent insertion of CO2 between the N7 and N8 nitrogen atoms of 7,8-diaminopelargonic acid (DAPA, also called 7,8-diammoniononanoate) to form a ureido ring. In Rhodopseudomonas palustris (strain ATCC BAA-98 / CGA009), this protein is ATP-dependent dethiobiotin synthetase BioD.